We begin with the raw amino-acid sequence, 182 residues long: Large ribosomal subunit protein uL5 (182 aa).

The protein belongs to the universal ribosomal protein uL5 family. Part of the 50S ribosomal subunit; part of the 5S rRNA/L5/L18/L25 subcomplex. Contacts the 5S rRNA and the P site tRNA. Forms a bridge to the 30S subunit in the 70S ribosome.

This is one of the proteins that bind and probably mediate the attachment of the 5S RNA into the large ribosomal subunit, where it forms part of the central protuberance. In the 70S ribosome it contacts protein S13 of the 30S subunit (bridge B1b), connecting the 2 subunits; this bridge is implicated in subunit movement. Contacts the P site tRNA; the 5S rRNA and some of its associated proteins might help stabilize positioning of ribosome-bound tRNAs. The sequence is that of Large ribosomal subunit protein uL5 from Nostoc sp. (strain PCC 7120 / SAG 25.82 / UTEX 2576).